The sequence spans 150 residues: FAD synthase (150 aa).

ATP-binding positions include 11–12 (TF), 16–19 (HPGH), aspartate 96, and tyrosine 124.

It belongs to the archaeal FAD synthase family. Homodimer. A divalent metal cation is required as a cofactor.

The catalysed reaction is FMN + ATP + H(+) = FAD + diphosphate. It functions in the pathway cofactor biosynthesis; FAD biosynthesis; FAD from FMN: step 1/1. Functionally, catalyzes the transfer of the AMP portion of ATP to flavin mononucleotide (FMN) to produce flavin adenine dinucleotide (FAD) coenzyme. The polypeptide is FAD synthase (Methanococcus maripaludis (strain C5 / ATCC BAA-1333)).